The following is a 485-amino-acid chain: Protein nucleotidyltransferase YdiU (485 aa).

8 residues coordinate ATP: Gly90, Gly92, Arg93, Lys113, Asp125, Gly126, Arg176, and Arg183. Catalysis depends on Asp252, which acts as the Proton acceptor. 2 residues coordinate Mg(2+): Asn253 and Asp262. Asp262 lines the ATP pocket.

Belongs to the SELO family. Mg(2+) serves as cofactor. Mn(2+) is required as a cofactor.

The enzyme catalyses L-seryl-[protein] + ATP = 3-O-(5'-adenylyl)-L-seryl-[protein] + diphosphate. It catalyses the reaction L-threonyl-[protein] + ATP = 3-O-(5'-adenylyl)-L-threonyl-[protein] + diphosphate. The catalysed reaction is L-tyrosyl-[protein] + ATP = O-(5'-adenylyl)-L-tyrosyl-[protein] + diphosphate. It carries out the reaction L-histidyl-[protein] + UTP = N(tele)-(5'-uridylyl)-L-histidyl-[protein] + diphosphate. The enzyme catalyses L-seryl-[protein] + UTP = O-(5'-uridylyl)-L-seryl-[protein] + diphosphate. It catalyses the reaction L-tyrosyl-[protein] + UTP = O-(5'-uridylyl)-L-tyrosyl-[protein] + diphosphate. Its function is as follows. Nucleotidyltransferase involved in the post-translational modification of proteins. It can catalyze the addition of adenosine monophosphate (AMP) or uridine monophosphate (UMP) to a protein, resulting in modifications known as AMPylation and UMPylation. This chain is Protein nucleotidyltransferase YdiU, found in Aliivibrio fischeri (strain ATCC 700601 / ES114) (Vibrio fischeri).